A 426-amino-acid chain; its full sequence is D-tagatose-1,6-bisphosphate aldolase subunit KbaZ (426 aa).

This sequence belongs to the GatZ/KbaZ family. KbaZ subfamily. As to quaternary structure, forms a complex with KbaY.

The protein operates within carbohydrate metabolism; D-tagatose 6-phosphate degradation; D-glyceraldehyde 3-phosphate and glycerone phosphate from D-tagatose 6-phosphate: step 2/2. Functionally, component of the tagatose-1,6-bisphosphate aldolase KbaYZ that is required for full activity and stability of the Y subunit. Could have a chaperone-like function for the proper and stable folding of KbaY. When expressed alone, KbaZ does not show any aldolase activity. The chain is D-tagatose-1,6-bisphosphate aldolase subunit KbaZ from Shigella flexneri.